The following is a 165-amino-acid chain: Phosphopantetheine adenylyltransferase (165 aa).

Residue S11 participates in substrate binding. ATP is bound by residues 11–12 (SF) and H19. The substrate site is built by K43, T76, and R90. Residues 91–93 (GIR), E101, and 126–132 (FSFISSS) each bind ATP.

It belongs to the bacterial CoaD family. As to quaternary structure, homohexamer. It depends on Mg(2+) as a cofactor.

It localises to the cytoplasm. It carries out the reaction (R)-4'-phosphopantetheine + ATP + H(+) = 3'-dephospho-CoA + diphosphate. The protein operates within cofactor biosynthesis; coenzyme A biosynthesis; CoA from (R)-pantothenate: step 4/5. Functionally, reversibly transfers an adenylyl group from ATP to 4'-phosphopantetheine, yielding dephospho-CoA (dPCoA) and pyrophosphate. This Latilactobacillus sakei subsp. sakei (strain 23K) (Lactobacillus sakei subsp. sakei) protein is Phosphopantetheine adenylyltransferase.